The sequence spans 461 residues: MAIVAQGVSTILTTFQKTFKGLLPLIILVAYTLLGAWIFWMIEGENEREMLIEQQKERDELIRRTVYKINQLQIKRQRRLMTAEEEYNRTAKVLTTFQETLGIVPADMDKDIHWTFLGSIFYCMTVYTTIGYGNIVPGTGWGRFATILYAFIGIPLTVLSLYCLGSLFAKGCKMLWRFFLKSTRVVSKDLSNKISEAADNIEEGTTAITPSAEKTENNDDDLLSFPISGLLLITVIWVIFCAVLFTFLEEWDFGTSLYFTLISFTTIGFGDILPSDYDFMPIVGVLLLIGLSLVSTVMTLIQQQIEALASGMKDNIDQEYARALNEAREDGEVDEHVDPEEDPENNKKSFDAVISRMNWSKRGLYYLLPDSQKKELAKQSEKKMGRKSIKIQTDNDLLETLIREEILKAELNNEMHKYTAPRSSHQPKLVYSDVREKEVPIEVVRVEHFNHGNEDYLEHDI.

Residues 1–21 lie on the Cytoplasmic side of the membrane; that stretch reads MAIVAQGVSTILTTFQKTFKG. The helical transmembrane segment at 22-42 threads the bilayer; sequence LLPLIILVAYTLLGAWIFWMI. N-linked (GlcNAc...) asparagine glycosylation is present at Asn-88. Residues 116-136 constitute an intramembrane region (pore-forming); the sequence is FLGSIFYCMTVYTTIGYGNIV. The chain crosses the membrane as a helical span at residues 144–164; it reads FATILYAFIGIPLTVLSLYCL. Residues 165-224 lie on the Cytoplasmic side of the membrane; that stretch reads GSLFAKGCKMLWRFFLKSTRVVSKDLSNKISEAADNIEEGTTAITPSAEKTENNDDDLLS. A helical membrane pass occupies residues 225–245; that stretch reads FPISGLLLITVIWVIFCAVLF. An intramembrane region (pore-forming) is located at residues 253–273; sequence FGTSLYFTLISFTTIGFGDIL. The helical transmembrane segment at 281 to 301 threads the bilayer; the sequence is PIVGVLLLIGLSLVSTVMTLI. At 302-461 the chain is on the cytoplasmic side; that stretch reads QQQIEALASG…GNEDYLEHDI (160 aa). Positions 328–347 are disordered; that stretch reads REDGEVDEHVDPEEDPENNK.

This sequence belongs to the two pore domain potassium channel (TC 1.A.1.8) family. In terms of tissue distribution, expressed in body wall muscle.

It localises to the membrane. Its function is as follows. Outwardly rectifying potassium channel protein; activity is sharply augmented by increase in temperature. This chain is TWiK family of potassium channels protein 18 (twk-18), found in Caenorhabditis elegans.